The chain runs to 605 residues: MFSLPALLIGACAFAAAAVAASGDGCRAGCSLAIAAYYFSEGSNLTFIATIFAIGGGGYQALLPYNPAITNPDYVVTGDRVLVPFPCSCLGLPAAPASTFLAGAIPYPLPLPRGGGDTYDAVAANYADLTTAAWLEATNAYPPGRIPGGDGRVNVTINCSCGDERVSPRYGLFLTYPLWDGETLESVAAQYGFSSPAEMELIRRYNPGMGGVSGKGIVFIPVKDPNGSYHPLKSGGMGNSLSGGAIAGIVIACIAIFIVAIWLIIMFYRWQKFRKATSRPSPEETSHLDDASQAEGIKVERSIEFSYEEIFNATQGFSMEHKIGQGGFGSVYYAELRGEKTAIKKMGMQATQEFLAELKVLTHVHHLNLVRLIGYCVENCLFLVYEFIDNGNLSQHLQRTGYAPLSWATRVQIALDSARGLEYLHEHVVPVYVHRDIKSANILLDKDFRAKIADFGLAKLTEVGSMSQSLSTRVAGTFGYMPPEARYGEVSPKVDVYAFGVVLYELLSAKQAIVRSSESVSESKGLVFLFEEALSAPNPTEALDELIDPSLQGDYPVDSALKIASLAKSCTHEEPGMRPTMRSVVVALMALTANTDLRDMDYHPF.

A signal peptide spans 1–20 (MFSLPALLIGACAFAAAAVA). Over 21-245 (ASGDGCRAGC…GMGNSLSGGA (225 aa)) the chain is Extracellular. Intrachain disulfides connect cysteine 26-cysteine 89, cysteine 30-cysteine 161, and cysteine 87-cysteine 159. Asparagine 44 is a glycosylation site (N-linked (GlcNAc...) asparagine). Chitin is bound by residues 115 to 121 (GGDTYDA) and 142 to 148 (PPGRIPG). N-linked (GlcNAc...) asparagine glycans are attached at residues asparagine 154 and asparagine 158. A LysM domain is found at 174–221 (LTYPLWDGETLESVAAQYGFSSPAEMELIRRYNPGMGGVSGKGIVFIP). Asparagine 226 is a glycosylation site (N-linked (GlcNAc...) asparagine). The chain crosses the membrane as a helical span at residues 246-266 (IAGIVIACIAIFIVAIWLIIM). Over 267-605 (FYRWQKFRKA…DLRDMDYHPF (339 aa)) the chain is Cytoplasmic. Serine 278 is subject to Phosphoserine. A Protein kinase domain is found at 317–591 (FSMEHKIGQG…RSVVVALMAL (275 aa)). ATP contacts are provided by residues 323–331 (IGQGGFGSV) and lysine 344. Aspartate 436 (proton acceptor) is an active-site residue.

It belongs to the protein kinase superfamily. Ser/Thr protein kinase family.

Its subcellular location is the cell membrane. It carries out the reaction L-seryl-[protein] + ATP = O-phospho-L-seryl-[protein] + ADP + H(+). The catalysed reaction is L-threonyl-[protein] + ATP = O-phospho-L-threonyl-[protein] + ADP + H(+). This chain is LysM domain receptor-like kinase 10, found in Oryza sativa subsp. japonica (Rice).